The sequence spans 817 residues: Dual specificity tyrosine-phosphorylation-regulated kinase mbk-2 (817 aa).

Disordered stretches follow at residues 1-46, 70-148, 186-206, and 301-396; these read MAAL…HECP, PTSF…GPLG, GSYEFPSGQAQQQRRLGGSQQ, and LPNV…FRPE. The span at 7–25 shows a compositional bias: polar residues; sequence FTRNSRSYGQQPIDVTQQG. 2 stretches are compositionally biased toward low complexity: residues 70–81 and 97–111; these read PTSFSGASSSSS and NLLGSSQNSASSNSL. Polar residues-rich tracts occupy residues 122–143 and 193–206; these read SGNTLTRSYHQPSSTNSSTNNL and GQAQQQRRLGGSQQ. A compositionally biased stretch (low complexity) spans 303-318; the sequence is NVGTSSSNGSSNSSSG. The segment covering 327-351 has biased composition (polar residues); the sequence is LMTQSIGGPNKHLSASHSTLNTAST. Ser362 is subject to Phosphoserine; by cdk-1. The segment covering 364–392 has biased composition (low complexity); that stretch reads SNESLSRSHTSSSGGSQGGHNSNSGSNSG. The Protein kinase domain occupies 461–774; the sequence is YEVLKVIGKG…PAQALKHKWL (314 aa). ATP contacts are provided by residues 467 to 475 and Lys490; that span reads IGKGSFGQV. Asp587 (proton acceptor) is an active-site residue. Residue Tyr621 is modified to Phosphotyrosine; by autocatalysis.

The protein belongs to the protein kinase superfamily. CMGC Ser/Thr protein kinase family. MNB/DYRK subfamily. In terms of assembly, part of a complex, consisting of pseudophosphatases egg-3, egg-4, egg-5 and kinase mbk-2; this complex is required for the oocyte-to-zygote transition. Interacts (via Tyr-619 and Tyr-621) with egg-4 (via tyrosine-protein phosphatase domain) and egg-5 (via tyrosine-protein phosphatase domain); mbk-2 tyrosine phosphorylation enhances the interaction. The interaction inhibits mbk-2 kinase activity and is required for mbk-2 oocyte cortex localization. Interacts (via N-terminus) with egg-3 (via tyrosine-protein phosphatase domain); the interaction does not affect mbk-2 kinase activity, is enhanced by mbk-2 tyrosine phosphorylation status and requires prior binding of mbk-2 to egg-4 and egg-5. Mg(2+) serves as cofactor. Post-translationally, autophosphorylated. In terms of tissue distribution, in L1 larvae, expressed widely in the nervous system, including head neurons and the ventral nerve cord. In adult animals, continues to be expressed in the nervous system and is also expressed in body wall muscle.

The protein localises to the cytoplasm. It is found in the cell cortex. The enzyme catalyses L-seryl-[protein] + ATP = O-phospho-L-seryl-[protein] + ADP + H(+). The catalysed reaction is L-threonyl-[protein] + ATP = O-phospho-L-threonyl-[protein] + ADP + H(+). It catalyses the reaction L-tyrosyl-[protein] + ATP = O-phospho-L-tyrosyl-[protein] + ADP + H(+). Its activity is regulated as follows. Activated during oocyte maturation by phosphorylation on Ser-362 by cdk-1. The pseudotyrosine phosphatases egg-4 and egg-5 sequester activated mbk-2 until the meiotic divisions and inhibit mbk-2 kinase activity directly, using a mixed-inhibition mechanism that does not involve tyrosine dephosphorylation. Its function is as follows. Required for oocyte-to-zygote transition in which it phosphorylates oocyte proteins, including mei-1, oma-1, oma-2, mex-5, and mex-6, modifying their activity and/or stability following meiosis. Through phosphorylation of P granule components including meg-1, promotes the disassembly of zygotic P granules in the anterior cytoplasm during zygote polarization, and thus plays a role in P granule distribution and segregation in early stage embryos following meiosis. Functions in both spindle positioning and in the posterior localization of cytoplasmic determinants, including pie-1, pos-1, and pgl-1, in early embryos. Involved in the asymmetric distribution of plk-1 at the 2-cell embryonic stage. In Caenorhabditis elegans, this protein is Dual specificity tyrosine-phosphorylation-regulated kinase mbk-2.